A 716-amino-acid chain; its full sequence is Leucine-rich repeat neuronal protein 1 (716 aa).

The first 25 residues, 1–25, serve as a signal peptide directing secretion; sequence MARMSFVIAACQLVLGLLMTSLTES. The LRRNT domain occupies 26–72; sequence SIQNSECPQLCVCEIRPWFTPQSTYREATTVDCNDLRLTRIPSNLSS. At 26 to 631 the chain is on the extracellular side; that stretch reads SIQNSECPQL…DISDQETSTA (606 aa). LRR repeat units follow at residues 73–95, 96–117, 120–141, 144–165, 168–189, 192–213, 216–237, 240–261, 264–285, 313–335, and 338–359; these read DTQVLLLQSNNIAKTVDELQQLF, NLTELDFSQNNFTNIKEVGLAN, QLTTLHLEENQITEMTDYCLQD, NLQELYINHNQISTISAHAFAG, NLLRLHLNSNKLKVIDSRWFDS, NLEILMIGENPVIGILDMNFKP, NLRSLVLAGMYLTDIPGNALVG, SLESLSFYDNKLVKVPQLALQK, NLKFLDLNKNPIHKIQEGDFKN, ELTKLEATNNPKLSYIHRLAFRS, and ALESLMLNNNALNAIYQKTVES. 2 N-linked (GlcNAc...) asparagine glycosylation sites follow: N96 and N117. In terms of domain architecture, LRRCT spans 371–424; it reads NPLRCDCVIHWINSNKTNIRFMEPLSMFCAMPPEYKGHQVKEVLIQDSSEQCLP. An N-linked (GlcNAc...) asparagine glycan is attached at N385. Positions 424–515 constitute an Ig-like C2-type domain; sequence PMISHDSFPN…GADTRVATIK (92 aa). A disulfide bond links C447 and C499. N-linked (GlcNAc...) asparagine glycosylation occurs at N517. Residues 525–617 enclose the Fibronectin type-III domain; it reads QVLKIYVKQT…SCVNVTTKNA (93 aa). A helical membrane pass occupies residues 632–652; the sequence is LAAVMGSMFAVISLASIAVYF. Residues 653–716 lie on the Cytoplasmic side of the membrane; it reads AKRFKRKNYH…VDTSRSYYMW (64 aa). Residues 691–700 show a composition bias toward basic and acidic residues; that stretch reads DSEKDKDGSA. The interval 691-716 is disordered; sequence DSEKDKDGSADTKPTQVDTSRSYYMW. Over residues 702 to 716 the composition is skewed to polar residues; sequence TKPTQVDTSRSYYMW.

It is found in the membrane. The sequence is that of Leucine-rich repeat neuronal protein 1 (LRRN1) from Homo sapiens (Human).